The following is a 132-amino-acid chain: Transcription antitermination protein NusB (132 aa).

The protein belongs to the NusB family.

In terms of biological role, involved in transcription antitermination. Required for transcription of ribosomal RNA (rRNA) genes. Binds specifically to the boxA antiterminator sequence of the ribosomal RNA (rrn) operons. The sequence is that of Transcription antitermination protein NusB from Lachnoclostridium phytofermentans (strain ATCC 700394 / DSM 18823 / ISDg) (Clostridium phytofermentans).